The following is a 211-amino-acid chain: Imidazole glycerol phosphate synthase subunit HisH (211 aa).

The region spanning 4–211 is the Glutamine amidotransferase type-1 domain; it reads TVALLDYGSG…QLLRNWINHI (208 aa). The active-site Nucleophile is C82. Catalysis depends on residues H192 and E194.

Heterodimer of HisH and HisF.

The protein localises to the cytoplasm. It catalyses the reaction 5-[(5-phospho-1-deoxy-D-ribulos-1-ylimino)methylamino]-1-(5-phospho-beta-D-ribosyl)imidazole-4-carboxamide + L-glutamine = D-erythro-1-(imidazol-4-yl)glycerol 3-phosphate + 5-amino-1-(5-phospho-beta-D-ribosyl)imidazole-4-carboxamide + L-glutamate + H(+). It carries out the reaction L-glutamine + H2O = L-glutamate + NH4(+). It participates in amino-acid biosynthesis; L-histidine biosynthesis; L-histidine from 5-phospho-alpha-D-ribose 1-diphosphate: step 5/9. Its function is as follows. IGPS catalyzes the conversion of PRFAR and glutamine to IGP, AICAR and glutamate. The HisH subunit catalyzes the hydrolysis of glutamine to glutamate and ammonia as part of the synthesis of IGP and AICAR. The resulting ammonia molecule is channeled to the active site of HisF. This chain is Imidazole glycerol phosphate synthase subunit HisH, found in Corynebacterium efficiens (strain DSM 44549 / YS-314 / AJ 12310 / JCM 11189 / NBRC 100395).